We begin with the raw amino-acid sequence, 64 residues long: Large ribosomal subunit protein bL33 (64 aa).

It belongs to the bacterial ribosomal protein bL33 family.

In Prochlorococcus marinus (strain MIT 9313), this protein is Large ribosomal subunit protein bL33.